Consider the following 868-residue polypeptide: Translation initiation factor IF-2 (868 aa).

Residues 199–209 (SKKEEVKPEKV) show a composition bias toward basic and acidic residues. The interval 199–269 (SKKEEVKPEK…GTEKSDKYRE (71 aa)) is disordered. The segment covering 249–260 (RGGRSKFKKKKG) has biased composition (basic residues). Residues 368–537 (GRAPVVTIMG…LLQSEVLELK (170 aa)) enclose the tr-type G domain. The segment at 377 to 384 (GHVDHGKT) is G1. 377–384 (GHVDHGKT) is a GTP binding site. A G2 region spans residues 402-406 (GITQH). The tract at residues 423-426 (DTPG) is G3. GTP-binding positions include 423 to 427 (DTPGH) and 477 to 480 (NKMD). Positions 477-480 (NKMD) are G4. The G5 stretch occupies residues 513-515 (SAK).

Belongs to the TRAFAC class translation factor GTPase superfamily. Classic translation factor GTPase family. IF-2 subfamily.

Its subcellular location is the cytoplasm. Its function is as follows. One of the essential components for the initiation of protein synthesis. Protects formylmethionyl-tRNA from spontaneous hydrolysis and promotes its binding to the 30S ribosomal subunits. Also involved in the hydrolysis of GTP during the formation of the 70S ribosomal complex. This is Translation initiation factor IF-2 from Legionella pneumophila (strain Paris).